We begin with the raw amino-acid sequence, 411 residues long: Endo-1,4-beta-xylanase A (411 aa).

Residues 1–33 (MKKFKIRKLMARVLALALVFSTFFMVSKVDANA) form the signal peptide. The 349-residue stretch at 34-382 (ASYNLMETYG…KPAYDEVVKA (349 aa)) folds into the GH10 domain. Catalysis depends on Glu201, which acts as the Proton donor. Glu311 serves as the catalytic Nucleophile. The interval 387–411 (FGNPGSFTPQPTITPQPTPTPSGQT) is disordered. Residues 398–411 (TITPQPTPTPSGQT) are compositionally biased toward pro residues.

The protein belongs to the glycosyl hydrolase 10 (cellulase F) family.

The catalysed reaction is Endohydrolysis of (1-&gt;4)-beta-D-xylosidic linkages in xylans.. It functions in the pathway glycan degradation; xylan degradation. In terms of biological role, b.fibrisolvens is located in the rumen of ruminant animals, where it contributes to the animal's digestion of plant material by hydrolyzing hemicellulose with its xylanases. This Butyrivibrio fibrisolvens protein is Endo-1,4-beta-xylanase A (xynA).